A 674-amino-acid polypeptide reads, in one-letter code: UvrABC system protein C (674 aa).

In terms of domain architecture, GIY-YIG spans asparagine 64–valine 142. Residues glutamine 252–valine 287 enclose the UVR domain.

The protein belongs to the UvrC family. As to quaternary structure, interacts with UvrB in an incision complex.

It localises to the cytoplasm. The UvrABC repair system catalyzes the recognition and processing of DNA lesions. UvrC both incises the 5' and 3' sides of the lesion. The N-terminal half is responsible for the 3' incision and the C-terminal half is responsible for the 5' incision. The chain is UvrABC system protein C from Rhizobium meliloti (strain 1021) (Ensifer meliloti).